Here is a 654-residue protein sequence, read N- to C-terminus: Cysteine-rich receptor-like protein kinase 40 (654 aa).

The first 27 residues, 1 to 27 (MGKCSALMIFLSSSLLLVLQTLHVVNA), serve as a signal peptide directing secretion. Gnk2-homologous domains follow at residues 28 to 131 (VKCF…NQST) and 143 to 250 (WPSP…LYSF). The Extracellular portion of the chain corresponds to 28-287 (VKCFGNSFNG…VKKGKSIGYG (260 aa)). Asparagine 38, asparagine 65, asparagine 128, asparagine 154, asparagine 167, and asparagine 256 each carry an N-linked (GlcNAc...) asparagine glycan. The helical transmembrane segment at 288–308 (GIIAIVVVFTFINLLVFIGFI) threads the bilayer. Topologically, residues 309–654 (KVYARRGKLN…DDVFTELSCR (346 aa)) are cytoplasmic. Residues 348–619 (FSSENTLGQG…VIIWLGSETI (272 aa)) form the Protein kinase domain. ATP-binding positions include 354–362 (LGQGGFGTV) and lysine 376. Tyrosine 421 bears the Phosphotyrosine mark. Aspartate 473 functions as the Proton acceptor in the catalytic mechanism. Serine 477 carries the post-translational modification Phosphoserine. Residue threonine 513 is modified to Phosphothreonine. Tyrosine 521 carries the post-translational modification Phosphotyrosine.

It belongs to the protein kinase superfamily. Ser/Thr protein kinase family. CRK subfamily.

Its subcellular location is the membrane. It carries out the reaction L-seryl-[protein] + ATP = O-phospho-L-seryl-[protein] + ADP + H(+). The catalysed reaction is L-threonyl-[protein] + ATP = O-phospho-L-threonyl-[protein] + ADP + H(+). This is Cysteine-rich receptor-like protein kinase 40 (CRK40) from Arabidopsis thaliana (Mouse-ear cress).